A 250-amino-acid chain; its full sequence is Pyridoxine 5'-phosphate synthase (250 aa).

N8 and R19 together coordinate 3-amino-2-oxopropyl phosphate. The Proton acceptor role is filled by H44. 1-deoxy-D-xylulose 5-phosphate contacts are provided by R46 and H51. Residue E76 is the Proton acceptor of the active site. T106 is a binding site for 1-deoxy-D-xylulose 5-phosphate. Catalysis depends on H200, which acts as the Proton donor. Residues D201 and 223–224 (GH) each bind 3-amino-2-oxopropyl phosphate.

This sequence belongs to the PNP synthase family. Homooctamer; tetramer of dimers.

It is found in the cytoplasm. It catalyses the reaction 3-amino-2-oxopropyl phosphate + 1-deoxy-D-xylulose 5-phosphate = pyridoxine 5'-phosphate + phosphate + 2 H2O + H(+). It functions in the pathway cofactor biosynthesis; pyridoxine 5'-phosphate biosynthesis; pyridoxine 5'-phosphate from D-erythrose 4-phosphate: step 5/5. In terms of biological role, catalyzes the complicated ring closure reaction between the two acyclic compounds 1-deoxy-D-xylulose-5-phosphate (DXP) and 3-amino-2-oxopropyl phosphate (1-amino-acetone-3-phosphate or AAP) to form pyridoxine 5'-phosphate (PNP) and inorganic phosphate. The protein is Pyridoxine 5'-phosphate synthase of Rhizobium meliloti (strain 1021) (Ensifer meliloti).